The chain runs to 225 residues: MSNKKAVILVSGGLDSTTALAIAQSEGYECYTLSFDYGQRHRVELEAAQRVSDKMHVAQHKVVQLDLKSIGGSALTDDDIAVPEDGPEGIPVTYVPARNTVFLSIALGWAEVLNAEAIFIGVNAVDYSGYPDCRPEYIAAFQKLAMLATKVGVEGKPLQIKTPLIDMTKAEIVQLGMRLGVDYSATVSCYQANVDGEACGRCDSCRLRRKGFEDAQMEDPTRYAN.

Residue 10–20 (VSGGLDSTTAL) participates in ATP binding. Positions 189, 199, 202, and 205 each coordinate Zn(2+).

The protein belongs to the QueC family. Requires Zn(2+) as cofactor.

The catalysed reaction is 7-carboxy-7-deazaguanine + NH4(+) + ATP = 7-cyano-7-deazaguanine + ADP + phosphate + H2O + H(+). Its pathway is purine metabolism; 7-cyano-7-deazaguanine biosynthesis. Catalyzes the ATP-dependent conversion of 7-carboxy-7-deazaguanine (CDG) to 7-cyano-7-deazaguanine (preQ(0)). This is 7-cyano-7-deazaguanine synthase from Saccharophagus degradans (strain 2-40 / ATCC 43961 / DSM 17024).